The following is a 515-amino-acid chain: MKKLKINYLFIGILTLLLAAALWPSIPWFGKADNRIAAIQSRGELRVSTIESPLTYARINGKKYGLDYELAQQFASYLGVKLKITVRQNISQLFDDLDNGNADLLAAGLVYNSERVKNYQPGPTYYSVSQQLVYRVGQYRPRTLATVNESQLSIAPGHVVVNDLQALKETKFPDLSWKVDDKKGTAALLSEVISGNLDYTIADSVAISLFQRVHPELAVALDVTDEQPVTWFSQLDDDNTLSAALLDFFNTINEDGSLARMEEKYLGHGDDFDYVDTRTFLRAVDGVLPDLQPLFEKYAQEIDWRLLAAISYQESHWDPLATSPTGVRGLMMLTKNTAQSLGLTDRTDAEQSISGGVRYIQDMMGKVPETVPEEERIWFALAAYNMGYAHMLDARALTVKTRGNPDSWADVKQRLPLLSQKQYYSKLTYGYARGHEAYAYVENIRKYQISLVGYLQEKEKQAAEAIKLAQDYPAVSPAEFDTETFPFSSFLSQPSSNYLSHSPSLPFSLKKKDEN.

The signal sequence occupies residues 1–32 (MKKLKINYLFIGILTLLLAAALWPSIPWFGKA). Positions 33–269 (DNRIAAIQSR…RMEEKYLGHG (237 aa)) are non-LT domain. The interval 270–515 (DDFDYVDTRT…PFSLKKKDEN (246 aa)) is LT domain. E314 is a catalytic residue. A disordered region spans residues 493-515 (QPSSNYLSHSPSLPFSLKKKDEN).

In the N-terminal section; belongs to the bacterial solute-binding protein 3 family. The protein in the C-terminal section; belongs to the transglycosylase Slt family.

The protein localises to the cell outer membrane. It catalyses the reaction Exolytic cleavage of the (1-&gt;4)-beta-glycosidic linkage between N-acetylmuramic acid (MurNAc) and N-acetylglucosamine (GlcNAc) residues in peptidoglycan, from either the reducing or the non-reducing ends of the peptidoglycan chains, with concomitant formation of a 1,6-anhydrobond in the MurNAc residue.. In terms of biological role, murein-degrading enzyme that degrades murein glycan strands and insoluble, high-molecular weight murein sacculi, with the concomitant formation of a 1,6-anhydromuramoyl product. Lytic transglycosylases (LTs) play an integral role in the metabolism of the peptidoglycan (PG) sacculus. Their lytic action creates space within the PG sacculus to allow for its expansion as well as for the insertion of various structures such as secretion systems and flagella. The protein is Membrane-bound lytic murein transglycosylase F of Citrobacter koseri (strain ATCC BAA-895 / CDC 4225-83 / SGSC4696).